We begin with the raw amino-acid sequence, 315 residues long: Hydroxysteroid 11-beta-dehydrogenase 1-like protein (315 aa).

An N-terminal signal peptide occupies residues 1–15; it reads MKVLLLTGLGALFFA. Residues 36 to 62, 87 to 88, and 114 to 116 each bind NADP(+); these read GANA…TAHT, DM, and NHI. Residue Ser165 coordinates substrate. Tyr178 (proton acceptor) is an active-site residue. Residues 178 to 182 and 211 to 217 contribute to the NADP(+) site; these read YSAAK and GLRDRAS. Residues 221–286 form a disordered region; sequence AVRSSTSRPR…SKTEKNDGHL (66 aa). A compositionally biased stretch (basic and acidic residues) spans 277–286; that stretch reads SKTEKNDGHL.

The protein belongs to the short-chain dehydrogenases/reductases (SDR) family. In terms of tissue distribution, highly expressed in the brain.

Its subcellular location is the secreted. It catalyses the reaction cortisone + NADPH + H(+) = cortisol + NADP(+). Unidirectional NADP(+)-dependent cortisol dehydrogenase (in vitro). The polypeptide is Hydroxysteroid 11-beta-dehydrogenase 1-like protein (HSD11B1L) (Homo sapiens (Human)).